The following is an 87-amino-acid chain: UPF0250 protein Spro_1197 (87 aa).

Belongs to the UPF0250 family.

In Serratia proteamaculans (strain 568), this protein is UPF0250 protein Spro_1197.